A 126-amino-acid chain; its full sequence is Large ribosomal subunit protein eL18 (126 aa).

Belongs to the eukaryotic ribosomal protein eL18 family.

This Methanosarcina acetivorans (strain ATCC 35395 / DSM 2834 / JCM 12185 / C2A) protein is Large ribosomal subunit protein eL18.